Reading from the N-terminus, the 258-residue chain is MDLSIIVIGASGRMGKTIIQVAQEQGIIIDAVIDRPTRLTSLASYNIASDSEPDKIFSRYPQAVVIDFTTPETSISMAQVAQKYGNPIIIGTTGFTLEQFDTLETLAKTSRIFWSPNMSIGINVLLKTLPQMAQILGNEYNIEIVEVHHNKKKDAPSGTAMRIAETLSTSRHWDLEKVACYNREGIVGERPQEQIGIQTIRGGDVVGVHTIYFIGPGERIEITHQADSRKNFAQGALKAAEWIIKQKAGRLYTMMDII.

Residues 9-14 (GASGRM), 91-93 (GTT), and 115-118 (SPNM) each bind NAD(+). Catalysis depends on histidine 148, which acts as the Proton donor/acceptor. Histidine 149 is a binding site for (S)-2,3,4,5-tetrahydrodipicolinate. The active-site Proton donor is the lysine 152. Residue 158-159 (GT) coordinates (S)-2,3,4,5-tetrahydrodipicolinate.

The protein belongs to the DapB family.

The protein localises to the cytoplasm. It carries out the reaction (S)-2,3,4,5-tetrahydrodipicolinate + NAD(+) + H2O = (2S,4S)-4-hydroxy-2,3,4,5-tetrahydrodipicolinate + NADH + H(+). The enzyme catalyses (S)-2,3,4,5-tetrahydrodipicolinate + NADP(+) + H2O = (2S,4S)-4-hydroxy-2,3,4,5-tetrahydrodipicolinate + NADPH + H(+). It participates in amino-acid biosynthesis; L-lysine biosynthesis via DAP pathway; (S)-tetrahydrodipicolinate from L-aspartate: step 4/4. In terms of biological role, catalyzes the conversion of 4-hydroxy-tetrahydrodipicolinate (HTPA) to tetrahydrodipicolinate. The polypeptide is 4-hydroxy-tetrahydrodipicolinate reductase (Lawsonia intracellularis (strain PHE/MN1-00)).